A 336-amino-acid chain; its full sequence is Holliday junction branch migration complex subunit RuvB (336 aa).

Residues 4–184 (SDRLISSQSI…FGIVQRLEYY (181 aa)) form a large ATPase domain (RuvB-L) region. Residues I23, R24, G65, K68, T69, T70, 131–133 (EDY), R174, Y184, and R221 contribute to the ATP site. Mg(2+) is bound at residue T69. The segment at 185–255 (SVDSLTQIVA…MAQQALEMLE (71 aa)) is small ATPAse domain (RuvB-S). Positions 258 to 336 (QHGFDLMDRK…HFGFSAIEQE (79 aa)) are head domain (RuvB-H). Residues R313 and R318 each contribute to the DNA site.

The protein belongs to the RuvB family. Homohexamer. Forms an RuvA(8)-RuvB(12)-Holliday junction (HJ) complex. HJ DNA is sandwiched between 2 RuvA tetramers; dsDNA enters through RuvA and exits via RuvB. An RuvB hexamer assembles on each DNA strand where it exits the tetramer. Each RuvB hexamer is contacted by two RuvA subunits (via domain III) on 2 adjacent RuvB subunits; this complex drives branch migration. In the full resolvosome a probable DNA-RuvA(4)-RuvB(12)-RuvC(2) complex forms which resolves the HJ.

It localises to the cytoplasm. It carries out the reaction ATP + H2O = ADP + phosphate + H(+). Its function is as follows. The RuvA-RuvB-RuvC complex processes Holliday junction (HJ) DNA during genetic recombination and DNA repair, while the RuvA-RuvB complex plays an important role in the rescue of blocked DNA replication forks via replication fork reversal (RFR). RuvA specifically binds to HJ cruciform DNA, conferring on it an open structure. The RuvB hexamer acts as an ATP-dependent pump, pulling dsDNA into and through the RuvAB complex. RuvB forms 2 homohexamers on either side of HJ DNA bound by 1 or 2 RuvA tetramers; 4 subunits per hexamer contact DNA at a time. Coordinated motions by a converter formed by DNA-disengaged RuvB subunits stimulates ATP hydrolysis and nucleotide exchange. Immobilization of the converter enables RuvB to convert the ATP-contained energy into a lever motion, pulling 2 nucleotides of DNA out of the RuvA tetramer per ATP hydrolyzed, thus driving DNA branch migration. The RuvB motors rotate together with the DNA substrate, which together with the progressing nucleotide cycle form the mechanistic basis for DNA recombination by continuous HJ branch migration. Branch migration allows RuvC to scan DNA until it finds its consensus sequence, where it cleaves and resolves cruciform DNA. This is Holliday junction branch migration complex subunit RuvB from Legionella pneumophila (strain Lens).